A 154-amino-acid polypeptide reads, in one-letter code: MSETKPASSKPAAAAKPKKVIPRVSRTGEPKSKPESRSARAGITFPVSRVDRLLREGRFAPRVESTAPVYLAAVLEYLVFEILELAHNTCSISKKTRITPQHINWAVGNDLELNSLFQHVTIAYGGVLPTPQQSTGEKKKKPSKKAAEGSSQIY.

The segment covering 1–15 has biased composition (low complexity); sequence MSETKPASSKPAAAA. Disordered regions lie at residues 1–41 and 128–154; these read MSET…SARA and LPTP…SQIY. Over residues 26–38 the composition is skewed to basic and acidic residues; it reads RTGEPKSKPESRS. Position 151 is a phosphoserine (serine 151). The [ST]-Q motif motif lies at 151–152; it reads SQ.

The protein belongs to the histone H2A family. In terms of assembly, the nucleosome is a histone octamer containing two molecules each of H2A, H2B, H3 and H4 assembled in one H3-H4 heterotetramer and two H2A-H2B heterodimers. The octamer wraps approximately 147 bp of DNA. Post-translationally, phosphorylated at Ser-151 to form H2AS128ph (gamma-H2AX) in response to DNA double-strand breaks (DSBs) generated by exogenous genotoxic agents and by stalled replication forks. Phosphorylation is dependent on the DNA damage checkpoint kinase atr1 and/or possibly dnapkcs, spreads on either side of a detected DSB site and may mark the surrounding chromatin for recruitment of proteins required for DNA damage signaling and repair. Gamma-H2AX is removed from the DNA prior to the strand invasion-primer extension step of the repair process and subsequently dephosphorylated. Dephosphorylation is necessary for efficient recovery from the DNA damage checkpoint.

Its subcellular location is the nucleus. The protein localises to the chromosome. In terms of biological role, core component of nucleosome which plays a central role in DNA double strand break (DSB) repair. Nucleosomes wrap and compact DNA into chromatin, limiting DNA accessibility to the cellular machineries which require DNA as a template. Histones thereby play a central role in transcription regulation, DNA repair, DNA replication and chromosomal stability. DNA accessibility is regulated via a complex set of post-translational modifications of histones, also called histone code, and nucleosome remodeling. Phosphorylation of H2AX seems to be performed by atr1 and/or possibly dnapkcs, as ATM ortholog is absent in the genome of this organism. The chain is Histone H2AX (H2AX) from Dictyostelium discoideum (Social amoeba).